We begin with the raw amino-acid sequence, 358 residues long: Fructose-bisphosphate aldolase class 2 (358 aa).

Residue S61 coordinates D-glyceraldehyde 3-phosphate. D109 (proton donor) is an active-site residue. H110, D144, E174, and H226 together coordinate Zn(2+). G227 is a binding site for dihydroxyacetone phosphate. H264 lines the Zn(2+) pocket. Residues G265–S267 and N286–T289 each bind dihydroxyacetone phosphate.

The protein belongs to the class II fructose-bisphosphate aldolase family. Requires Zn(2+) as cofactor.

It carries out the reaction beta-D-fructose 1,6-bisphosphate = D-glyceraldehyde 3-phosphate + dihydroxyacetone phosphate. The protein operates within carbohydrate degradation; glycolysis; D-glyceraldehyde 3-phosphate and glycerone phosphate from D-glucose: step 4/4. In terms of biological role, catalyzes the aldol condensation of dihydroxyacetone phosphate (DHAP or glycerone-phosphate) with glyceraldehyde 3-phosphate (G3P) to form fructose 1,6-bisphosphate (FBP) in gluconeogenesis and the reverse reaction in glycolysis. This Buchnera aphidicola subsp. Acyrthosiphon pisum (strain APS) (Acyrthosiphon pisum symbiotic bacterium) protein is Fructose-bisphosphate aldolase class 2 (fbaA).